Here is a 1152-residue protein sequence, read N- to C-terminus: Integrin alpha-M (1152 aa).

Residues Met-1–Gly-16 form the signal peptide. The Extracellular portion of the chain corresponds to Phe-17–Asn-1104. 2 FG-GAP repeats span residues Asn-18–Pro-75 and Ile-76–Gln-135. Cys-66 and Cys-73 are joined by a disulfide. N-linked (GlcNAc...) asparagine glycosylation occurs at Asn-86. The cysteines at positions 105 and 123 are disulfide-linked. A VWFA domain is found at Asp-150–Leu-328. A glycan (N-linked (GlcNAc...) asparagine) is linked at Asn-240. 5 FG-GAP repeats span residues Gln-339–Ile-390, Asn-391–Trp-442, Glu-443–Trp-503, Asp-506–Ser-564, and Gln-569–Arg-629. N-linked (GlcNAc...) asparagine glycosylation occurs at Asn-391. Ca(2+)-binding residues include Asp-465, Asp-467, Asn-469, Asp-473, Asp-529, Asn-531, Asp-533, Asp-537, Asp-592, Asp-596, and Asp-600. N-linked (GlcNAc...) asparagine glycosylation occurs at Asn-469. Cys-654 and Cys-711 are disulfide-bonded. 3 N-linked (GlcNAc...) asparagine glycosylation sites follow: Asn-692, Asn-696, and Asn-734. Cys-770 and Cys-776 are disulfide-bonded. N-linked (GlcNAc...) asparagine glycosylation is present at Asn-801. Cys-847 and Cys-864 form a disulfide bridge. Residues Asn-880, Asn-900, Asn-911, Asn-940, Asn-946, Asn-978, Asn-993, and Asn-1021 are each glycosylated (N-linked (GlcNAc...) asparagine). 2 cysteine pairs are disulfide-bonded: Cys-998–Cys-1022 and Cys-1027–Cys-1032. Asn-1044, Asn-1050, and Asn-1075 each carry an N-linked (GlcNAc...) asparagine glycan. Residues Pro-1105 to Tyr-1128 traverse the membrane as a helical segment. Topologically, residues Lys-1129 to Gln-1152 are cytoplasmic. Residues Gly-1131–Arg-1135 carry the GFFKR motif motif.

This sequence belongs to the integrin alpha chain family. In terms of assembly, heterodimer of an alpha and a beta subunit. ITGAM associates with ITGB2. Found in a complex with CD177 and ITGB2/CD18. Interacts with JAM3. Interacts with THBD. Interacts with complement factor H/CFH; this interaction mediates adhesion of neutrophils to pathogens leading to pathogen clearance. Interacts with TMEM268; this interaction inhibits ITGAM degradation via the endosome-lysosome pathway. As to expression, predominantly expressed in monocytes and granulocytes. Expressed in neutrophils (at protein level).

The protein resides in the cell membrane. It is found in the membrane raft. In terms of biological role, integrin ITGAM/ITGB2 is implicated in various adhesive interactions of monocytes, macrophages and granulocytes as well as in mediating the uptake of complement-coated particles and pathogens. It is identical with CR-3, the receptor for the iC3b fragment of the third complement component. It probably recognizes the R-G-D peptide in C3b. Integrin ITGAM/ITGB2 is also a receptor for fibrinogen, factor X and ICAM1. It recognizes P1 and P2 peptides of fibrinogen gamma chain. Regulates neutrophil migration. In association with beta subunit ITGB2/CD18, required for CD177-PRTN3-mediated activation of TNF primed neutrophils. May regulate phagocytosis-induced apoptosis in extravasated neutrophils. May play a role in mast cell development. Required with TYROBP/DAP12 in microglia to control production of microglial superoxide ions which promote the neuronal apoptosis that occurs during brain development. This is Integrin alpha-M (ITGAM) from Homo sapiens (Human).